Consider the following 417-residue polypeptide: Serpin A3-7 (417 aa).

A signal peptide spans 1–25 (MRTERTSFLLALGLLVSGFCSRVHC). 4 N-linked (GlcNAc...) asparagine glycosylation sites follow: N103, N183, N221, and N267.

It belongs to the serpin family. In terms of assembly, homodimer.

The protein localises to the cytoplasmic vesicle. It is found in the secretory vesicle. The protein resides in the chromaffin granule. Its subcellular location is the secreted. Serine protease inhibitor. The sequence is that of Serpin A3-7 from Bos taurus (Bovine).